The primary structure comprises 213 residues: Large ribosomal subunit protein uL3 (213 aa).

The segment at 122 to 147 is disordered; it reads AIKRHGQSRGPMAHGSRYHRRPGSMG.

It belongs to the universal ribosomal protein uL3 family. In terms of assembly, part of the 50S ribosomal subunit. Forms a cluster with proteins L14 and L19.

One of the primary rRNA binding proteins, it binds directly near the 3'-end of the 23S rRNA, where it nucleates assembly of the 50S subunit. This chain is Large ribosomal subunit protein uL3, found in Geobacillus stearothermophilus (Bacillus stearothermophilus).